A 572-amino-acid chain; its full sequence is Proline--tRNA ligase (572 aa).

Belongs to the class-II aminoacyl-tRNA synthetase family. ProS type 1 subfamily. As to quaternary structure, homodimer. May form a tertiary complex with YbaK and t-RNA(Pro).

The protein localises to the cytoplasm. It carries out the reaction tRNA(Pro) + L-proline + ATP = L-prolyl-tRNA(Pro) + AMP + diphosphate. In terms of biological role, catalyzes the attachment of proline to tRNA(Pro) in a two-step reaction: proline is first activated by ATP to form Pro-AMP and then transferred to the acceptor end of tRNA(Pro). As ProRS can inadvertently accommodate and process non-cognate amino acids such as alanine and cysteine, to avoid such errors it has two additional distinct editing activities against alanine. One activity is designated as 'pretransfer' editing and involves the tRNA(Pro)-independent hydrolysis of activated Ala-AMP. The other activity is designated 'posttransfer' editing and involves deacylation of mischarged Ala-tRNA(Pro). The misacylated Cys-tRNA(Pro) is not edited by ProRS, but is probably edited in trans by YbaK. The chain is Proline--tRNA ligase from Haemophilus influenzae (strain ATCC 51907 / DSM 11121 / KW20 / Rd).